Here is a 473-residue protein sequence, read N- to C-terminus: Cysteine--tRNA ligase (473 aa).

Residue Cys-28 coordinates Zn(2+). A 'HIGH' region motif is present at residues 30–40; sequence PTVYNMPHIGN. Residues Cys-213, His-238, and Glu-242 each contribute to the Zn(2+) site. The 'KMSKS' region signature appears at 270–274; that stretch reads KMSKS. Lys-273 provides a ligand contact to ATP.

Belongs to the class-I aminoacyl-tRNA synthetase family. Zn(2+) is required as a cofactor.

It is found in the cytoplasm. The enzyme catalyses tRNA(Cys) + L-cysteine + ATP = L-cysteinyl-tRNA(Cys) + AMP + diphosphate. This Methanosarcina acetivorans (strain ATCC 35395 / DSM 2834 / JCM 12185 / C2A) protein is Cysteine--tRNA ligase.